Consider the following 261-residue polypeptide: Transmembrane protein 106A (261 aa).

Positions Met-1 to Ser-10 are enriched in polar residues. Residues Met-1 to Asn-22 are disordered. Residues Leu-93 to Leu-113 traverse the membrane as a helical segment.

Belongs to the TMEM106 family.

The protein localises to the cell membrane. Its function is as follows. Activates macrophages and polarizes them into M1-like macrophages through the activation of the MAPK and NF-kappaB signaling pathway. Upon activation, up-regulates the expression of CD80, CD86, CD69 and MHC II on macrophages, and induces the release of pro-inflammatory cytokines such as TNF, IL1B, IL6, CCL2 and nitric oxide. May play a role in inhibition of proliferation and migration. This is Transmembrane protein 106A (Tmem106a) from Rattus norvegicus (Rat).